Consider the following 545-residue polypeptide: Chaperonin GroEL (545 aa).

Residues 29 to 32 (TMGP), Lys-50, 86 to 90 (DGTTT), Gly-414, 480 to 482 (NAA), and Asp-496 each bind ATP.

The protein belongs to the chaperonin (HSP60) family. In terms of assembly, forms a cylinder of 14 subunits composed of two heptameric rings stacked back-to-back. Interacts with the co-chaperonin GroES.

It is found in the cytoplasm. It carries out the reaction ATP + H2O + a folded polypeptide = ADP + phosphate + an unfolded polypeptide.. Its function is as follows. Together with its co-chaperonin GroES, plays an essential role in assisting protein folding. The GroEL-GroES system forms a nano-cage that allows encapsulation of the non-native substrate proteins and provides a physical environment optimized to promote and accelerate protein folding. This chain is Chaperonin GroEL, found in Malacoplasma penetrans (strain HF-2) (Mycoplasma penetrans).